A 301-amino-acid chain; its full sequence is Dihydroorotate dehydrogenase B (NAD(+)), catalytic subunit (301 aa).

Substrate contacts are provided by residues Lys44, 68–72, and Asn122; that span reads NAMGL. 44 to 45 contributes to the FMN binding site; it reads KS. An FMN-binding site is contributed by Asn122. Cys125 acts as the Nucleophile in catalysis. FMN contacts are provided by Lys160 and Ile186. 187–188 lines the substrate pocket; sequence NT. Residues Gly212, 238-239, and 260-261 contribute to the FMN site; these read GG and GS.

Belongs to the dihydroorotate dehydrogenase family. Type 1 subfamily. As to quaternary structure, heterotetramer of 2 PyrK and 2 PyrD type B subunits. The cofactor is FMN.

The protein resides in the cytoplasm. It carries out the reaction (S)-dihydroorotate + NAD(+) = orotate + NADH + H(+). The protein operates within pyrimidine metabolism; UMP biosynthesis via de novo pathway; orotate from (S)-dihydroorotate (NAD(+) route): step 1/1. Its function is as follows. Catalyzes the conversion of dihydroorotate to orotate with NAD(+) as electron acceptor. The chain is Dihydroorotate dehydrogenase B (NAD(+)), catalytic subunit (pyrD) from Methanocella arvoryzae (strain DSM 22066 / NBRC 105507 / MRE50).